Consider the following 748-residue polypeptide: 5-methyltetrahydropteroyltriglutamate--homocysteine methyltransferase (748 aa).

5-methyltetrahydropteroyltri-L-glutamate-binding positions include 18-21 (REWK) and Lys-112. Residues 420–422 (IGS) and Glu-473 contribute to the L-homocysteine site. Residues 420–422 (IGS) and Glu-473 contribute to the L-methionine site. Position 550 (Trp-550) interacts with 5-methyltetrahydropteroyltri-L-glutamate. Asp-588 lines the L-homocysteine pocket. Asp-588 is an L-methionine binding site. Glu-594 serves as a coordination point for 5-methyltetrahydropteroyltri-L-glutamate. Zn(2+)-binding residues include His-630, Cys-632, and Glu-654. His-683 serves as the catalytic Proton donor. Cys-715 is a binding site for Zn(2+).

Belongs to the vitamin-B12 independent methionine synthase family. Zn(2+) serves as cofactor.

It catalyses the reaction 5-methyltetrahydropteroyltri-L-glutamate + L-homocysteine = tetrahydropteroyltri-L-glutamate + L-methionine. The protein operates within amino-acid biosynthesis; L-methionine biosynthesis via de novo pathway; L-methionine from L-homocysteine (MetE route): step 1/1. Catalyzes the transfer of a methyl group from 5-methyltetrahydrofolate to homocysteine resulting in methionine formation. This Staphylococcus epidermidis (strain ATCC 12228 / FDA PCI 1200) protein is 5-methyltetrahydropteroyltriglutamate--homocysteine methyltransferase.